The primary structure comprises 448 residues: 3-phosphoshikimate 1-carboxyvinyltransferase (448 aa).

Positions 38, 39, and 43 each coordinate 3-phosphoshikimate. Residue lysine 38 participates in phosphoenolpyruvate binding. Phosphoenolpyruvate-binding residues include glycine 111 and arginine 140. Serine 185, glutamine 187, aspartate 335, and lysine 362 together coordinate 3-phosphoshikimate. Glutamine 187 is a phosphoenolpyruvate binding site. The Proton acceptor role is filled by aspartate 335. Residues arginine 366 and arginine 408 each coordinate phosphoenolpyruvate.

It belongs to the EPSP synthase family. As to quaternary structure, monomer.

It is found in the cytoplasm. The catalysed reaction is 3-phosphoshikimate + phosphoenolpyruvate = 5-O-(1-carboxyvinyl)-3-phosphoshikimate + phosphate. Its pathway is metabolic intermediate biosynthesis; chorismate biosynthesis; chorismate from D-erythrose 4-phosphate and phosphoenolpyruvate: step 6/7. Functionally, catalyzes the transfer of the enolpyruvyl moiety of phosphoenolpyruvate (PEP) to the 5-hydroxyl of shikimate-3-phosphate (S3P) to produce enolpyruvyl shikimate-3-phosphate and inorganic phosphate. This is 3-phosphoshikimate 1-carboxyvinyltransferase from Synechococcus elongatus (strain ATCC 33912 / PCC 7942 / FACHB-805) (Anacystis nidulans R2).